Here is a 525-residue protein sequence, read N- to C-terminus: GMP synthase [glutamine-hydrolyzing] (525 aa).

The Glutamine amidotransferase type-1 domain occupies 9–207 (RILILDFGSQ…VHEICGCPAD (199 aa)). Cysteine 86 serves as the catalytic Nucleophile. Active-site residues include histidine 181 and glutamate 183. Positions 208-400 (WTPGNIVDDL…LGLPADMVYR (193 aa)) constitute a GMPS ATP-PPase domain. 235 to 241 (SGGVDSS) serves as a coordination point for ATP.

In terms of assembly, homodimer.

The enzyme catalyses XMP + L-glutamine + ATP + H2O = GMP + L-glutamate + AMP + diphosphate + 2 H(+). It functions in the pathway purine metabolism; GMP biosynthesis; GMP from XMP (L-Gln route): step 1/1. In terms of biological role, catalyzes the synthesis of GMP from XMP. The protein is GMP synthase [glutamine-hydrolyzing] of Alkalilimnicola ehrlichii (strain ATCC BAA-1101 / DSM 17681 / MLHE-1).